Here is a 318-residue protein sequence, read N- to C-terminus: Protein-methionine-sulfoxide reductase catalytic subunit MsrP (318 aa).

The tat-type signal signal peptide spans methionine 1–alanine 40. Mo-molybdopterin-binding positions include asparagine 72, tyrosine 75–glutamate 76, cysteine 130, threonine 165, asparagine 217, arginine 222, and serine 233–lysine 235.

Belongs to the MsrP family. As to quaternary structure, heterodimer of a catalytic subunit (MsrP) and a heme-binding subunit (MsrQ). Mo-molybdopterin serves as cofactor. Post-translationally, predicted to be exported by the Tat system. The position of the signal peptide cleavage has not been experimentally proven.

Its subcellular location is the periplasm. It catalyses the reaction L-methionyl-[protein] + a quinone + H2O = L-methionyl-(S)-S-oxide-[protein] + a quinol. It carries out the reaction L-methionyl-[protein] + a quinone + H2O = L-methionyl-(R)-S-oxide-[protein] + a quinol. Part of the MsrPQ system that repairs oxidized periplasmic proteins containing methionine sulfoxide residues (Met-O), using respiratory chain electrons. Thus protects these proteins from oxidative-stress damage caused by reactive species of oxygen and chlorine generated by the host defense mechanisms. MsrPQ is essential for the maintenance of envelope integrity under bleach stress, rescuing a wide series of structurally unrelated periplasmic proteins from methionine oxidation. The catalytic subunit MsrP is non-stereospecific, being able to reduce both (R-) and (S-) diastereoisomers of methionine sulfoxide. The sequence is that of Protein-methionine-sulfoxide reductase catalytic subunit MsrP from Actinobacillus pleuropneumoniae serotype 3 (strain JL03).